Here is a 336-residue protein sequence, read N- to C-terminus: Ornithine carbamoyltransferase, catabolic (336 aa).

Residues 57–60 (STRT), glutamine 84, arginine 108, and 135–138 (HPTQ) each bind carbamoyl phosphate. L-ornithine-binding positions include asparagine 168, aspartate 232, and 236–237 (SM). Carbamoyl phosphate-binding positions include 274-275 (CL) and arginine 321.

The protein belongs to the aspartate/ornithine carbamoyltransferase superfamily. OTCase family.

Its subcellular location is the cytoplasm. It carries out the reaction carbamoyl phosphate + L-ornithine = L-citrulline + phosphate + H(+). Its pathway is amino-acid degradation; L-arginine degradation via ADI pathway; carbamoyl phosphate from L-arginine: step 2/2. Its function is as follows. Reversibly catalyzes the transfer of the carbamoyl group from carbamoyl phosphate (CP) to the N(epsilon) atom of ornithine (ORN) to produce L-citrulline. This is Ornithine carbamoyltransferase, catabolic (arcB) from Pseudomonas putida (strain ATCC 47054 / DSM 6125 / CFBP 8728 / NCIMB 11950 / KT2440).